Consider the following 351-residue polypeptide: Translation initiation factor eIF2B subunit beta (351 aa).

It belongs to the eIF-2B alpha/beta/delta subunits family. Component of the translation initiation factor 2B (eIF2B) complex which is a heterodecamer of two sets of five different subunits: alpha, beta, gamma, delta and epsilon. Subunits alpha, beta and delta comprise a regulatory subcomplex and subunits epsilon and gamma comprise a catalytic subcomplex. Within the complex, the hexameric regulatory complex resides at the center, with the two heterodimeric catalytic subcomplexes bound on opposite sides.

It is found in the cytoplasm. The protein localises to the cytosol. Its activity is regulated as follows. Activated by the chemical integrated stress response (ISR) inhibitor ISRIB which stimulates guanine nucleotide exchange factor activity for both phosphorylated and unphosphorylated eIF2. In terms of biological role, acts as a component of the translation initiation factor 2B (eIF2B) complex, which catalyzes the exchange of GDP for GTP on eukaryotic initiation factor 2 (eIF2) gamma subunit. Its guanine nucleotide exchange factor activity is repressed when bound to eIF2 complex phosphorylated on the alpha subunit, thereby limiting the amount of methionyl-initiator methionine tRNA available to the ribosome and consequently global translation is repressed. The polypeptide is Translation initiation factor eIF2B subunit beta (EIF2B2) (Homo sapiens (Human)).